The following is a 410-amino-acid chain: Elongation factor Tu, chloroplastic (410 aa).

Residues 10-215 (KPHVNIGTIG…AVDQYIPTPK (206 aa)) form the tr-type G domain. The G1 stretch occupies residues 19-26 (GHVDHGKT). 19–26 (GHVDHGKT) is a binding site for GTP. Residue Thr-26 participates in Mg(2+) binding. The G2 stretch occupies residues 61–65 (GITIN). The G3 stretch occupies residues 82-85 (DCPG). Residues 82-86 (DCPGH) and 137-140 (NKQD) contribute to the GTP site. A G4 region spans residues 137 to 140 (NKQD). Positions 175 to 177 (SAL) are G5.

It belongs to the TRAFAC class translation factor GTPase superfamily. Classic translation factor GTPase family. EF-Tu/EF-1A subfamily.

The protein localises to the plastid. It localises to the chloroplast. The enzyme catalyses GTP + H2O = GDP + phosphate + H(+). Its function is as follows. GTP hydrolase that promotes the GTP-dependent binding of aminoacyl-tRNA to the A-site of ribosomes during protein biosynthesis. The protein is Elongation factor Tu, chloroplastic (tufA) of Nephroselmis olivacea (Green alga).